The primary structure comprises 302 residues: Oxygen-dependent coproporphyrinogen-III oxidase (302 aa).

Ser94 lines the substrate pocket. Positions 98 and 108 each coordinate a divalent metal cation. The active-site Proton donor is His108. Position 110 to 112 (110 to 112 (NVR)) interacts with substrate. The a divalent metal cation site is built by His147 and His177. Positions 242 to 277 (YVEFNLVWDRGTLFGLQSGGRTESILMSMPPLVRWE) are important for dimerization. 260-262 (GGR) provides a ligand contact to substrate.

It belongs to the aerobic coproporphyrinogen-III oxidase family. As to quaternary structure, homodimer. Requires a divalent metal cation as cofactor.

The protein resides in the cytoplasm. It catalyses the reaction coproporphyrinogen III + O2 + 2 H(+) = protoporphyrinogen IX + 2 CO2 + 2 H2O. The protein operates within porphyrin-containing compound metabolism; protoporphyrin-IX biosynthesis; protoporphyrinogen-IX from coproporphyrinogen-III (O2 route): step 1/1. Involved in the heme biosynthesis. Catalyzes the aerobic oxidative decarboxylation of propionate groups of rings A and B of coproporphyrinogen-III to yield the vinyl groups in protoporphyrinogen-IX. The chain is Oxygen-dependent coproporphyrinogen-III oxidase from Chromobacterium violaceum (strain ATCC 12472 / DSM 30191 / JCM 1249 / CCUG 213 / NBRC 12614 / NCIMB 9131 / NCTC 9757 / MK).